The chain runs to 211 residues: Probable GTP-binding protein EngB (211 aa).

The EngB-type G domain occupies 21 to 205 (LMATIVFVGR…KNRIYEIIRE (185 aa)). GTP-binding positions include 29–36 (GRSNVGKS), 54–58 (GVTRK), 71–74 (DMPG), 151–154 (NKLD), and 184–186 (ISA). Residues Ser-36 and Thr-56 each coordinate Mg(2+).

It belongs to the TRAFAC class TrmE-Era-EngA-EngB-Septin-like GTPase superfamily. EngB GTPase family. Mg(2+) is required as a cofactor.

Its function is as follows. Necessary for normal cell division and for the maintenance of normal septation. This chain is Probable GTP-binding protein EngB, found in Pyrococcus abyssi (strain GE5 / Orsay).